Here is a 129-residue protein sequence, read N- to C-terminus: UPF0212 protein Mbar_A2902 (129 aa).

The protein belongs to the UPF0212 family.

The chain is UPF0212 protein Mbar_A2902 from Methanosarcina barkeri (strain Fusaro / DSM 804).